Consider the following 292-residue polypeptide: Ribosomal protein L11 methyltransferase (292 aa).

4 residues coordinate S-adenosyl-L-methionine: T143, G164, D186, and N227.

It belongs to the methyltransferase superfamily. PrmA family.

The protein localises to the cytoplasm. It catalyses the reaction L-lysyl-[protein] + 3 S-adenosyl-L-methionine = N(6),N(6),N(6)-trimethyl-L-lysyl-[protein] + 3 S-adenosyl-L-homocysteine + 3 H(+). Its function is as follows. Methylates ribosomal protein L11. The chain is Ribosomal protein L11 methyltransferase from Hahella chejuensis (strain KCTC 2396).